The primary structure comprises 336 residues: Holliday junction branch migration complex subunit RuvB (336 aa).

Residues 4–184 (ADRLISAGTT…FGIVQRLEFY (181 aa)) are large ATPase domain (RuvB-L). Residues I23, R24, G65, K68, T69, T70, 131–133 (EDY), R174, Y184, and R221 each bind ATP. Position 69 (T69) interacts with Mg(2+). Residues 185 to 255 (QVPDLQYIVS…IAAQALDMLN (71 aa)) form a small ATPAse domain (RuvB-S) region. The tract at residues 258-336 (AEGFDYMDRK…HFGITPPEMP (79 aa)) is head domain (RuvB-H). R294, R313, and R318 together coordinate DNA.

The protein belongs to the RuvB family. In terms of assembly, homohexamer. Forms an RuvA(8)-RuvB(12)-Holliday junction (HJ) complex. HJ DNA is sandwiched between 2 RuvA tetramers; dsDNA enters through RuvA and exits via RuvB. An RuvB hexamer assembles on each DNA strand where it exits the tetramer. Each RuvB hexamer is contacted by two RuvA subunits (via domain III) on 2 adjacent RuvB subunits; this complex drives branch migration. In the full resolvosome a probable DNA-RuvA(4)-RuvB(12)-RuvC(2) complex forms which resolves the HJ.

Its subcellular location is the cytoplasm. It carries out the reaction ATP + H2O = ADP + phosphate + H(+). The RuvA-RuvB-RuvC complex processes Holliday junction (HJ) DNA during genetic recombination and DNA repair, while the RuvA-RuvB complex plays an important role in the rescue of blocked DNA replication forks via replication fork reversal (RFR). RuvA specifically binds to HJ cruciform DNA, conferring on it an open structure. The RuvB hexamer acts as an ATP-dependent pump, pulling dsDNA into and through the RuvAB complex. RuvB forms 2 homohexamers on either side of HJ DNA bound by 1 or 2 RuvA tetramers; 4 subunits per hexamer contact DNA at a time. Coordinated motions by a converter formed by DNA-disengaged RuvB subunits stimulates ATP hydrolysis and nucleotide exchange. Immobilization of the converter enables RuvB to convert the ATP-contained energy into a lever motion, pulling 2 nucleotides of DNA out of the RuvA tetramer per ATP hydrolyzed, thus driving DNA branch migration. The RuvB motors rotate together with the DNA substrate, which together with the progressing nucleotide cycle form the mechanistic basis for DNA recombination by continuous HJ branch migration. Branch migration allows RuvC to scan DNA until it finds its consensus sequence, where it cleaves and resolves cruciform DNA. This is Holliday junction branch migration complex subunit RuvB from Escherichia coli (strain ATCC 8739 / DSM 1576 / NBRC 3972 / NCIMB 8545 / WDCM 00012 / Crooks).